A 484-amino-acid polypeptide reads, in one-letter code: Chromosomal replication initiator protein DnaA (484 aa).

A domain I, interacts with DnaA modulators region spans residues Met-1–Thr-73. Residues Thr-73–Pro-140 are domain II. The tract at residues Phe-141–Ile-357 is domain III, AAA+ region. 4 residues coordinate ATP: Gly-185, Gly-187, Lys-188, and Thr-189. The tract at residues Asp-358 to Asn-484 is domain IV, binds dsDNA.

This sequence belongs to the DnaA family. As to quaternary structure, oligomerizes as a right-handed, spiral filament on DNA at oriC.

It localises to the cytoplasm. Plays an essential role in the initiation and regulation of chromosomal replication. ATP-DnaA binds to the origin of replication (oriC) to initiate formation of the DNA replication initiation complex once per cell cycle. Binds the DnaA box (a 9 base pair repeat at the origin) and separates the double-stranded (ds)DNA. Forms a right-handed helical filament on oriC DNA; dsDNA binds to the exterior of the filament while single-stranded (ss)DNA is stabiized in the filament's interior. The ATP-DnaA-oriC complex binds and stabilizes one strand of the AT-rich DNA unwinding element (DUE), permitting loading of DNA polymerase. After initiation quickly degrades to an ADP-DnaA complex that is not apt for DNA replication. Binds acidic phospholipids. This Borrelia recurrentis (strain A1) protein is Chromosomal replication initiator protein DnaA.